The following is a 203-amino-acid chain: NADH-quinone oxidoreductase subunit C (203 aa).

This sequence belongs to the complex I 30 kDa subunit family. NDH-1 is composed of 14 different subunits. Subunits NuoB, C, D, E, F, and G constitute the peripheral sector of the complex.

The protein resides in the cell inner membrane. The catalysed reaction is a quinone + NADH + 5 H(+)(in) = a quinol + NAD(+) + 4 H(+)(out). Its function is as follows. NDH-1 shuttles electrons from NADH, via FMN and iron-sulfur (Fe-S) centers, to quinones in the respiratory chain. The immediate electron acceptor for the enzyme in this species is believed to be ubiquinone. Couples the redox reaction to proton translocation (for every two electrons transferred, four hydrogen ions are translocated across the cytoplasmic membrane), and thus conserves the redox energy in a proton gradient. The sequence is that of NADH-quinone oxidoreductase subunit C from Methylibium petroleiphilum (strain ATCC BAA-1232 / LMG 22953 / PM1).